The chain runs to 262 residues: MRRTLYRLMIELTNGRFTSYILRKFAQSRLSSIIIPSYAKVFQINQDEMEKGLKEYRTLHELFTRKLKEGKRSIDTDASSIVSPVDGVFADHGPIEDTKTFDIKGKRYSIVDMLGNEERATRYAGGTYMVIYLSPSHYHRIHSPLSGSVTERFVLGRKSYPVNAAGMEYGKEPLSKNYRSVTEVSSDGEHMALVKVGAMFVNSIELLHERDTVQKGEEMAYFTFGSTVVLLFEKDMIEVVQELKSGQELRLGEKIATRLAHK.

Residues Asp-86, His-142, and Ser-226 each act as charge relay system; for autoendoproteolytic cleavage activity in the active site. The Schiff-base intermediate with substrate; via pyruvic acid; for decarboxylase activity role is filled by Ser-226. A Pyruvic acid (Ser); by autocatalysis modification is found at Ser-226.

This sequence belongs to the phosphatidylserine decarboxylase family. PSD-B subfamily. Prokaryotic type I sub-subfamily. As to quaternary structure, heterodimer of a large membrane-associated beta subunit and a small pyruvoyl-containing alpha subunit. Requires pyruvate as cofactor. In terms of processing, is synthesized initially as an inactive proenzyme. Formation of the active enzyme involves a self-maturation process in which the active site pyruvoyl group is generated from an internal serine residue via an autocatalytic post-translational modification. Two non-identical subunits are generated from the proenzyme in this reaction, and the pyruvate is formed at the N-terminus of the alpha chain, which is derived from the carboxyl end of the proenzyme. The autoendoproteolytic cleavage occurs by a canonical serine protease mechanism, in which the side chain hydroxyl group of the serine supplies its oxygen atom to form the C-terminus of the beta chain, while the remainder of the serine residue undergoes an oxidative deamination to produce ammonia and the pyruvoyl prosthetic group on the alpha chain. During this reaction, the Ser that is part of the protease active site of the proenzyme becomes the pyruvoyl prosthetic group, which constitutes an essential element of the active site of the mature decarboxylase.

Its subcellular location is the cell membrane. It catalyses the reaction a 1,2-diacyl-sn-glycero-3-phospho-L-serine + H(+) = a 1,2-diacyl-sn-glycero-3-phosphoethanolamine + CO2. It functions in the pathway phospholipid metabolism; phosphatidylethanolamine biosynthesis; phosphatidylethanolamine from CDP-diacylglycerol: step 2/2. Functionally, catalyzes the formation of phosphatidylethanolamine (PtdEtn) from phosphatidylserine (PtdSer). This Bacillus cereus (strain B4264) protein is Phosphatidylserine decarboxylase proenzyme.